Here is a 128-residue protein sequence, read N- to C-terminus: Early E3 14.5 kDa protein (128 aa).

It belongs to the adenoviridae E3_15 family.

In terms of biological role, protects virus-infected cells from TNF-induced cytolysis. This is Early E3 14.5 kDa protein from Human adenovirus C serotype 5 (HAdV-5).